Here is an 874-residue protein sequence, read N- to C-terminus: Translation initiation factor IF-2 (874 aa).

The disordered stretch occupies residues methionine 1–arginine 289. Residues serine 31–lysine 48 are compositionally biased toward basic and acidic residues. The segment covering arginine 81–phenylalanine 104 has biased composition (polar residues). Over residues serine 105–serine 118 the composition is skewed to low complexity. Composition is skewed to basic and acidic residues over residues proline 144 to proline 158 and proline 186 to threonine 198. Polar residues predominate over residues glycine 199–valine 211. Over residues tyrosine 228 to glycine 260 the composition is skewed to basic and acidic residues. Positions arginine 271 to lysine 280 are enriched in basic residues. A tr-type G domain is found at isoleucine 380–lysine 549. Residues glycine 389 to threonine 396 are G1. Glycine 389 to threonine 396 contacts GTP. Residues alanine 414–histidine 418 form a G2 region. A G3 region spans residues aspartate 435–glycine 438. Residues aspartate 435–histidine 439 and asparagine 489–aspartate 492 each bind GTP. Positions asparagine 489 to aspartate 492 are G4. Residues serine 525–lysine 527 are G5.

It belongs to the TRAFAC class translation factor GTPase superfamily. Classic translation factor GTPase family. IF-2 subfamily.

The protein resides in the cytoplasm. Its function is as follows. One of the essential components for the initiation of protein synthesis. Protects formylmethionyl-tRNA from spontaneous hydrolysis and promotes its binding to the 30S ribosomal subunits. Also involved in the hydrolysis of GTP during the formation of the 70S ribosomal complex. In Chlamydia abortus (strain DSM 27085 / S26/3) (Chlamydophila abortus), this protein is Translation initiation factor IF-2.